The primary structure comprises 178 residues: Extracellular fatty acid-binding protein (178 aa).

Residues 1–20 form the signal peptide; the sequence is MRTLALSLGLALLCLLHAKA. Thr43 is a binding site for enterobactin. 1-tetradecanoyl-sn-glycerol 3-phosphate contacts are provided by Tyr72 and Lys104. Cysteines 80 and 173 form a disulfide. The enterobactin site is built by Lys104, Arg123, and Arg134. 134 to 136 serves as a coordination point for 1-tetradecanoyl-sn-glycerol 3-phosphate; sequence RLY.

This sequence belongs to the calycin superfamily. Lipocalin family. As to quaternary structure, monomer.

It localises to the secreted. In terms of biological role, siderocalin-like lipocalin tightly binding a variety of bacterial ferric siderophores, also binds long-chain unsaturated fatty acids such as linoleic acid, oleic acid, arachidonic acid and, with a lower affinity, long chain saturated fatty acids such as steraic acid. May act as an antibacterial factor, through dual ligand specificity, both as a siderophore-sequestrating molecule and a lysophosphatidic acid (LPA) sensor. In Coturnix japonica (Japanese quail), this protein is Extracellular fatty acid-binding protein.